Consider the following 57-residue polypeptide: COP9 signalosome complex subunit 9 (57 aa).

T26 carries the post-translational modification Phosphothreonine.

The protein belongs to the CSN9 family. As to quaternary structure, component of the CSN complex, composed of COPS1/GPS1, COPS2, COPS3, COPS4, COPS5, COPS6, COPS7 (COPS7A or COPS7B), COPS8 and COPS9. In the complex, it interacts directly with COPS3, COPS5 and COPS6.

The protein localises to the nucleus. The protein resides in the cytoplasm. Its subcellular location is the nucleoplasm. Its function is as follows. Component of the COP9 signalosome complex (CSN), a complex involved in various cellular and developmental processes. The CSN complex is an essential regulator of the ubiquitin (Ubl) conjugation pathway by mediating the deneddylation of the cullin subunits of SCF-type E3 ligase complexes, leading to decrease the Ubl ligase activity of SCF-type complexes such as SCF, CSA or DDB2. The complex is also involved in phosphorylation of p53/TP53, c-jun/JUN, IkappaBalpha/NFKBIA, ITPK1 and IRF8/ICSBP, possibly via its association with CK2 and PKD kinases. CSN-dependent phosphorylation of TP53 and JUN promotes and protects degradation by the Ubl system, respectively. Plays a role in cell proliferation. This is COP9 signalosome complex subunit 9 from Mus musculus (Mouse).